The primary structure comprises 303 residues: Mitochondrial substrate carrier family protein E (303 aa).

Topologically, residues 1–8 (MENKKESS) are mitochondrial intermembrane. 3 Solcar repeats span residues 6–93 (ESSL…SKQW), 104–197 (ESTI…CKST), and 210–298 (LPIP…LKYL). Residues 9–29 (LLYILTGATSGLLADSIMHPV) traverse the membrane as a helical segment. Over 30–67 (DTVRARVQIEKVGKSQYKGTFNALNQIIKNEGVSYLYK) the chain is Mitochondrial matrix. A helical transmembrane segment spans residues 68 to 88 (GFPIVATATVPAHALYFLGYE). The Mitochondrial intermembrane portion of the chain corresponds to 89 to 109 (YSKQWVTDRYGKKWGESTITH). A helical transmembrane segment spans residues 110-130 (FSAGFVADALGSLIWVPMDII). The Mitochondrial matrix portion of the chain corresponds to 131–171 (KQRLQVQTNTQKLNPNQTYYKGSFHAGKIILQEEGIRGLYR). Residues 172 to 192 (GFMPALATYGPFVGIYFSVYE) traverse the membrane as a helical segment. The Mitochondrial intermembrane segment spans residues 193–215 (KCKSTISSLLSKEKDQYLPIPYQ). A helical membrane pass occupies residues 216 to 236 (LGSGFFAGAFAAAVTCPLDVI). Over 237–268 (KTRIQVQRSTEKQIYKGMWDSFKTILKEEGPK) the chain is Mitochondrial matrix. Residues 269–289 (AFVKGMGARIWWIAPGNALTI) traverse the membrane as a helical segment. The Mitochondrial intermembrane portion of the chain corresponds to 290-303 (ASYEQLKYLFKDLI).

The protein belongs to the mitochondrial carrier (TC 2.A.29) family.

The protein localises to the mitochondrion inner membrane. In terms of biological role, mitochondrial solute carriers shuttle metabolites, nucleotides, and cofactors through the mitochondrial inner membrane. This Dictyostelium discoideum (Social amoeba) protein is Mitochondrial substrate carrier family protein E (mcfE).